Here is a 127-residue protein sequence, read N- to C-terminus: uncharacterized protein (127 aa).

4 helical membrane passes run 1–21 (MYII…YILV), 32–52 (TVAA…LYVF), 68–88 (AFFS…IILV), and 100–120 (ILDN…LVFK).

The protein belongs to the GtrA family.

The protein resides in the cell membrane. This is an uncharacterized protein from Bacillus subtilis (strain 168).